Here is a 152-residue protein sequence, read N- to C-terminus: Large ribosomal subunit protein bL9 (152 aa).

It belongs to the bacterial ribosomal protein bL9 family.

In terms of biological role, binds to the 23S rRNA. In Mycobacterium avium (strain 104), this protein is Large ribosomal subunit protein bL9.